A 434-amino-acid polypeptide reads, in one-letter code: Enolase (434 aa).

A (2R)-2-phosphoglycerate-binding site is contributed by Gln-163. The active-site Proton donor is the Glu-205. The Mg(2+) site is built by Asp-242, Glu-291, and Asp-318. The (2R)-2-phosphoglycerate site is built by Lys-343, Arg-372, Ser-373, and Lys-394. Lys-343 serves as the catalytic Proton acceptor.

Belongs to the enolase family. Requires Mg(2+) as cofactor.

The protein localises to the cytoplasm. It is found in the secreted. The protein resides in the cell surface. The catalysed reaction is (2R)-2-phosphoglycerate = phosphoenolpyruvate + H2O. The protein operates within carbohydrate degradation; glycolysis; pyruvate from D-glyceraldehyde 3-phosphate: step 4/5. Catalyzes the reversible conversion of 2-phosphoglycerate (2-PG) into phosphoenolpyruvate (PEP). It is essential for the degradation of carbohydrates via glycolysis. The sequence is that of Enolase from Streptococcus thermophilus (strain CNRZ 1066).